A 238-amino-acid chain; its full sequence is Isoprene-epoxide--glutathione S-transferase (238 aa).

A GST N-terminal domain is found at Tyr7 to Leu82. One can recognise a GST C-terminal domain in the interval Asp118 to Ile238.

Belongs to the GST superfamily. In terms of assembly, homodimer.

It catalyses the reaction 2-glutathionyl-2-methylbut-3-en-1-ol = (3R)-3,4-epoxy-3-methylbut-1-ene + glutathione. Activity is inhibited by 1,2-epoxyhexane. Functionally, involved in isoprene degradation. Catalyzes the glutathione-dependent ring opening of various epoxides. The highest conversion rate is observed with the physiological substrate, 3,4-epoxy-3-methyl-1-butene, which is the primary oxidation product of isoprene. It can also use other epoxides, including epoxyethane, epoxypropane, epithiopropane, epichlorohydrin, epifluorohydrin, epibromohydrin, 1,2-epoxybutane, 1,2-epoxyhexane, cis-2,3-epoxybutane, cis-1,2-dichloroepoxyethane and trans-1,2-dichloroepoxyethane. This chain is Isoprene-epoxide--glutathione S-transferase, found in Rhodococcus sp. (strain AD45).